The sequence spans 178 residues: Colicin-A immunity protein (178 aa).

Residues 1 to 13 (MMNEHSIDTDNRK) are Cytoplasmic-facing. The chain crosses the membrane as a helical span at residues 14-37 (ANNALYLFIIIGLIPLLCIFVVYY). Over 38-68 (KTPDALLLRKIATSTENLPSITSSYNPLMTK) the chain is Periplasmic. The chain crosses the membrane as a helical span at residues 69 to 89 (VMDIYCKTAPFLALILYILTF). Topologically, residues 90 to 105 (KIRKLINNTDRNTVLR) are cytoplasmic. Residues 106-123 (SCLLSPLVYAAIVYLFCF) form a helical membrane-spanning segment. Residues 124–142 (RNFELTTAGRPVRLMATND) lie on the Periplasmic side of the membrane. A helical transmembrane segment spans residues 143–165 (ATLLLFYIGLYSIIFFTTYITLF). Residues 166–178 (TPVTAFKLLKKRQ) are Cytoplasmic-facing.

The protein localises to the cell inner membrane. In terms of biological role, this protein is able to protect a cell, which harbors the plasmid ColA encoding colicin A, against colicin A. The chain is Colicin-A immunity protein (cai) from Citrobacter freundii.